We begin with the raw amino-acid sequence, 325 residues long: NADH-quinone oxidoreductase subunit H (325 aa).

Helical transmembrane passes span 11–31, 81–101, 114–134, 154–174, 186–206, 237–257, 265–285, and 304–324; these read ILLT…CGAF, VIFT…FAIV, IGIL…LFAG, LSYE…AGSF, VWNV…GVAV, FFVG…TLFF, LPPF…FILI, and ICLP…LWQA.

It belongs to the complex I subunit 1 family. As to quaternary structure, NDH-1 is composed of 13 different subunits. Subunits NuoA, H, J, K, L, M, N constitute the membrane sector of the complex.

It localises to the cell inner membrane. The enzyme catalyses a quinone + NADH + 5 H(+)(in) = a quinol + NAD(+) + 4 H(+)(out). Functionally, NDH-1 shuttles electrons from NADH, via FMN and iron-sulfur (Fe-S) centers, to quinones in the respiratory chain. The immediate electron acceptor for the enzyme in this species is believed to be ubiquinone. Couples the redox reaction to proton translocation (for every two electrons transferred, four hydrogen ions are translocated across the cytoplasmic membrane), and thus conserves the redox energy in a proton gradient. This subunit may bind ubiquinone. The polypeptide is NADH-quinone oxidoreductase subunit H (Shigella flexneri serotype 5b (strain 8401)).